Reading from the N-terminus, the 360-residue chain is Protein phosphatase 1 regulatory subunit 7 (360 aa).

The tract at residues 1-63 (MAAERGAGQQ…RGAEDPEEEH (63 aa)) is disordered. Residue A2 is modified to N-acetylalanine. 5 positions are modified to phosphoserine: S12, S24, S27, S44, and S47. Residues 17–34 (EVDRRVESEESGDEEGKK) show a composition bias toward basic and acidic residues. 11 LRR repeats span residues 77–98 (DAED…EVLK), 99–120 (KVKS…DELQ), 121–142 (SLRE…EALT), 143–164 (ELEV…DKLT), 165–186 (QLKK…STLQ), 187–208 (QLQM…DTLT), 209–230 (NLES…DALS), 231–252 (NLTV…QNLV), 253–274 (NLRE…ENNN), 275–296 (KLTM…SHLT), and 297–318 (ELQE…DELK). Position 322 is a phosphoserine (S322). In terms of domain architecture, LRRCT spans 331-360 (NPLQKDPQYRRKVMLALPSVRQIDATFVRF).

It belongs to the SDS22 family. In terms of assembly, interacts with PPP1CA, PPP1CB and PPP1CC/PPP1G.

It localises to the nucleus. Functionally, regulatory subunit of protein phosphatase 1. This chain is Protein phosphatase 1 regulatory subunit 7 (Ppp1r7), found in Rattus norvegicus (Rat).